A 364-amino-acid polypeptide reads, in one-letter code: Methylthioribose-1-phosphate isomerase (364 aa).

Substrate is bound by residues 53-55, Arg-90, and Gln-203; that span reads RGA. Asp-244 serves as the catalytic Proton donor. Residue 254-255 participates in substrate binding; that stretch reads NK.

This sequence belongs to the eIF-2B alpha/beta/delta subunits family. MtnA subfamily.

The catalysed reaction is 5-(methylsulfanyl)-alpha-D-ribose 1-phosphate = 5-(methylsulfanyl)-D-ribulose 1-phosphate. The protein operates within amino-acid biosynthesis; L-methionine biosynthesis via salvage pathway; L-methionine from S-methyl-5-thio-alpha-D-ribose 1-phosphate: step 1/6. In terms of biological role, catalyzes the interconversion of methylthioribose-1-phosphate (MTR-1-P) into methylthioribulose-1-phosphate (MTRu-1-P). This Brucella anthropi (strain ATCC 49188 / DSM 6882 / CCUG 24695 / JCM 21032 / LMG 3331 / NBRC 15819 / NCTC 12168 / Alc 37) (Ochrobactrum anthropi) protein is Methylthioribose-1-phosphate isomerase.